Consider the following 438-residue polypeptide: Chromosomal replication initiator protein DnaA (438 aa).

Residues 1-74 (MNEINKIWQK…SFYQITGSQV (74 aa)) are domain I, interacts with DnaA modulators. Residues 74–100 (VEVKYIITGKEHETGLIEEKKQVIKKG) are domain II. Residues 101–317 (NLNPKYTFDT…GSLIKLCAYT (217 aa)) form a domain III, AAA+ region region. Residues G145, G147, K148, and T149 each contribute to the ATP site. The interval 318 to 438 (SLTKVPISMD…DSIIKKVTGQ (121 aa)) is domain IV, binds dsDNA.

This sequence belongs to the DnaA family. Oligomerizes as a right-handed, spiral filament on DNA at oriC.

The protein resides in the cytoplasm. In terms of biological role, plays an essential role in the initiation and regulation of chromosomal replication. ATP-DnaA binds to the origin of replication (oriC) to initiate formation of the DNA replication initiation complex once per cell cycle. Binds the DnaA box (a 9 base pair repeat at the origin) and separates the double-stranded (ds)DNA. Forms a right-handed helical filament on oriC DNA; dsDNA binds to the exterior of the filament while single-stranded (ss)DNA is stabiized in the filament's interior. The ATP-DnaA-oriC complex binds and stabilizes one strand of the AT-rich DNA unwinding element (DUE), permitting loading of DNA polymerase. After initiation quickly degrades to an ADP-DnaA complex that is not apt for DNA replication. Binds acidic phospholipids. The sequence is that of Chromosomal replication initiator protein DnaA from Thermodesulfovibrio yellowstonii (strain ATCC 51303 / DSM 11347 / YP87).